Reading from the N-terminus, the 70-residue chain is MWFEILPGLAVMGVCLVIPGVATAYIHKYTNGGKEKRVGRLRYQWYLMERDRRVSGVNRYYVSRGLENID.

Residues Met1 to Val21 form a helical membrane-spanning segment.

It belongs to the complex I NDUFA1 subunit family. As to quaternary structure, complex I is composed of 45 different subunits.

It localises to the mitochondrion inner membrane. Its function is as follows. Accessory subunit of the mitochondrial membrane respiratory chain NADH dehydrogenase (Complex I), that is believed not to be involved in catalysis. Complex I functions in the transfer of electrons from NADH to the respiratory chain. The immediate electron acceptor for the enzyme is believed to be ubiquinone. The chain is NADH dehydrogenase [ubiquinone] 1 alpha subcomplex subunit 1 (NDUFA1) from Cricetulus griseus (Chinese hamster).